A 76-amino-acid chain; its full sequence is Acyl carrier protein (76 aa).

The region spanning 1–74 is the Carrier domain; that stretch reads MFDKLKEIIA…DVVEYITEHT (74 aa). Ser34 is subject to O-(pantetheine 4'-phosphoryl)serine.

This sequence belongs to the acyl carrier protein (ACP) family. Post-translationally, 4'-phosphopantetheine is transferred from CoA to a specific serine of apo-ACP by AcpS. This modification is essential for activity because fatty acids are bound in thioester linkage to the sulfhydryl of the prosthetic group.

It localises to the cytoplasm. It functions in the pathway lipid metabolism; fatty acid biosynthesis. Its function is as follows. Carrier of the growing fatty acid chain in fatty acid biosynthesis. This is Acyl carrier protein from Clostridium perfringens (strain ATCC 13124 / DSM 756 / JCM 1290 / NCIMB 6125 / NCTC 8237 / Type A).